The primary structure comprises 113 residues: Mediator of RNA polymerase II transcription subunit 22 (113 aa).

It belongs to the Mediator complex subunit 22 family. In terms of assembly, component of the Mediator complex.

It is found in the nucleus. Its function is as follows. Component of the Mediator complex, a coactivator involved in the regulated transcription of nearly all RNA polymerase II-dependent genes. Mediator functions as a bridge to convey information from gene-specific regulatory proteins to the basal RNA polymerase II transcription machinery. Mediator is recruited to promoters by direct interactions with regulatory proteins and serves as a scaffold for the assembly of a functional preinitiation complex with RNA polymerase II and the general transcription factors. The protein is Mediator of RNA polymerase II transcription subunit 22 (SRB6) of Candida glabrata (strain ATCC 2001 / BCRC 20586 / JCM 3761 / NBRC 0622 / NRRL Y-65 / CBS 138) (Yeast).